The chain runs to 255 residues: Flap endonuclease Xni (255 aa).

D105 lines the Mg(2+) pocket. The 5'-3' exonuclease domain maps to 162–254; that stretch reads EHKQFIDYLA…LKQFRLPKAN (93 aa). L172, A173, P181, V183, and I186 together coordinate K(+). Residues 185 to 190 form an interaction with DNA region; that stretch reads GIGPKS.

It belongs to the Xni family. Mg(2+) is required as a cofactor. Requires K(+) as cofactor.

Has flap endonuclease activity. During DNA replication, flap endonucleases cleave the 5'-overhanging flap structure that is generated by displacement synthesis when DNA polymerase encounters the 5'-end of a downstream Okazaki fragment. This is Flap endonuclease Xni from Shewanella piezotolerans (strain WP3 / JCM 13877).